We begin with the raw amino-acid sequence, 554 residues long: Valerianol synthase TPS1F (554 aa).

Residues D307 and D311 each coordinate Mg(2+). The short motif at 326–330 (VQRWD) is the DDXXD motif element. 3 residues coordinate Mg(2+): D452, S456, and E460.

The protein belongs to the terpene synthase family. Requires Mg(2+) as cofactor.

It catalyses the reaction (2E,6E)-farnesyl diphosphate + H2O = valerianol + diphosphate. The protein operates within secondary metabolite biosynthesis; terpenoid biosynthesis. In terms of biological role, terpene synthase that catalyzes the biosynthesis of the terpene valerianol, which is a volatile compound of floral scent. The polypeptide is Valerianol synthase TPS1F (Camellia hiemalis (Camellia)).